The chain runs to 734 residues: Photosystem I P700 chlorophyll a apoprotein A2 (734 aa).

Helical transmembrane passes span 46-69 (IFAS…FHVA), 135-158 (LYTG…LHLQ), 175-199 (LNHH…HVAI), 273-291 (MAHH…GHMY), 330-353 (LHFQ…QHMY), 369-395 (AASY…IFFI), 417-439 (AIIS…LYVH), and 517-535 (FLVH…LILV). Positions 559 and 568 each coordinate [4Fe-4S] cluster. 2 helical membrane-spanning segments follow: residues 575–596 (AFYL…YWHW) and 643–665 (LSVW…MFLI). Chlorophyll a-binding residues include His654, Met662, and Tyr670. Trp671 contributes to the phylloquinone binding site. A helical transmembrane segment spans residues 707-727 (LVGLAHFSVGYIFTYAAFLIA).

This sequence belongs to the PsaA/PsaB family. As to quaternary structure, the PsaA/B heterodimer binds the P700 chlorophyll special pair and subsequent electron acceptors. PSI consists of a core antenna complex that captures photons, and an electron transfer chain that converts photonic excitation into a charge separation. The eukaryotic PSI reaction center is composed of at least 11 subunits. The cofactor is P700 is a chlorophyll a/chlorophyll a' dimer, A0 is one or more chlorophyll a, A1 is one or both phylloquinones and FX is a shared 4Fe-4S iron-sulfur center..

The protein localises to the plastid. The protein resides in the chloroplast thylakoid membrane. It carries out the reaction reduced [plastocyanin] + hnu + oxidized [2Fe-2S]-[ferredoxin] = oxidized [plastocyanin] + reduced [2Fe-2S]-[ferredoxin]. PsaA and PsaB bind P700, the primary electron donor of photosystem I (PSI), as well as the electron acceptors A0, A1 and FX. PSI is a plastocyanin-ferredoxin oxidoreductase, converting photonic excitation into a charge separation, which transfers an electron from the donor P700 chlorophyll pair to the spectroscopically characterized acceptors A0, A1, FX, FA and FB in turn. Oxidized P700 is reduced on the lumenal side of the thylakoid membrane by plastocyanin. The chain is Photosystem I P700 chlorophyll a apoprotein A2 from Acorus calamus (Sweet flag).